A 382-amino-acid chain; its full sequence is MVRSPPTDSVGLVTQHKATFEEPLPLVCGRELPRYELVYETYGELNREGTNAILVCHALSGNHHAAGYHSEHDRKPGWWETCIGPGKPLDTNRFFVVCSNNLGGCHGSTGPASINPETGKPYGDQFPIVTVRDWVRSQARLADELGIRQWAAVAGGSLGGMQAMQWAIDYPERLRHAIVIAAAPRLSAQNIGFNEVARQAIMSDPEFHGGRYYDYGVSPRRGLAVARMLGHITYLSDDAMRAKFGRDLRGDMSFDFEQVDFEVESYLRYQGQRFVQDFDANTYLLMTKALDYFDPAADHDDDFSAALAHIQCSTLLLSFSSDWRFAPARSREILRALLEHNKPVSYMEIEATQGHDAFLMPIQRYLEAFSAYMGNVAREVGA.

An AB hydrolase-1 domain is found at 51–359 (NAILVCHALS…EATQGHDAFL (309 aa)). The Nucleophile role is filled by serine 157. Arginine 227 is a substrate binding site. Residues aspartate 322 and histidine 355 contribute to the active site. Aspartate 356 lines the substrate pocket.

Belongs to the AB hydrolase superfamily. MetX family. Homodimer.

The protein resides in the cytoplasm. The catalysed reaction is L-homoserine + succinyl-CoA = O-succinyl-L-homoserine + CoA. It functions in the pathway amino-acid biosynthesis; L-methionine biosynthesis via de novo pathway; O-succinyl-L-homoserine from L-homoserine: step 1/1. Transfers a succinyl group from succinyl-CoA to L-homoserine, forming succinyl-L-homoserine. The sequence is that of Homoserine O-succinyltransferase from Halorhodospira halophila (strain DSM 244 / SL1) (Ectothiorhodospira halophila (strain DSM 244 / SL1)).